A 360-amino-acid chain; its full sequence is Phospho-N-acetylmuramoyl-pentapeptide-transferase (360 aa).

Helical transmembrane passes span 26–46 (AIVS…RMIA), 72–92 (PTMG…LWAY), 94–114 (SNPY…VGFV), 132–152 (WKYF…YMIG), 168–188 (VMPQ…VGTS), 199–219 (GLAI…AWAT), 236–256 (AGEL…FLWF), 263–283 (VFMG…IAVL), 288–308 (FLLV…ILQV), and 338–358 (VIVR…ATLK).

The protein belongs to the glycosyltransferase 4 family. MraY subfamily. Mg(2+) serves as cofactor.

Its subcellular location is the cell inner membrane. The catalysed reaction is UDP-N-acetyl-alpha-D-muramoyl-L-alanyl-gamma-D-glutamyl-meso-2,6-diaminopimeloyl-D-alanyl-D-alanine + di-trans,octa-cis-undecaprenyl phosphate = di-trans,octa-cis-undecaprenyl diphospho-N-acetyl-alpha-D-muramoyl-L-alanyl-D-glutamyl-meso-2,6-diaminopimeloyl-D-alanyl-D-alanine + UMP. It participates in cell wall biogenesis; peptidoglycan biosynthesis. Its function is as follows. Catalyzes the initial step of the lipid cycle reactions in the biosynthesis of the cell wall peptidoglycan: transfers peptidoglycan precursor phospho-MurNAc-pentapeptide from UDP-MurNAc-pentapeptide onto the lipid carrier undecaprenyl phosphate, yielding undecaprenyl-pyrophosphoryl-MurNAc-pentapeptide, known as lipid I. This is Phospho-N-acetylmuramoyl-pentapeptide-transferase from Erwinia tasmaniensis (strain DSM 17950 / CFBP 7177 / CIP 109463 / NCPPB 4357 / Et1/99).